The chain runs to 87 residues: uncharacterized protein (87 aa).

Residues 1-22 form the signal peptide; it reads MKIKTTVAALSVLSVLSFGAFA.

This sequence belongs to the BhsA/McbA family.

It localises to the periplasm. This is an uncharacterized protein from Escherichia coli O6:H1 (strain CFT073 / ATCC 700928 / UPEC).